The primary structure comprises 884 residues: Bifunctional heparan sulfate N-deacetylase/N-sulfotransferase 2 (884 aa).

Over 1 to 18 (MLKLWKVVRPARQLELHR) the chain is Cytoplasmic. Residues 19-39 (LILLLIAFSLGSMGFLAYYVS) form a helical; Signal-anchor for type II membrane protein membrane-spanning segment. The Lumenal portion of the chain corresponds to 40 to 884 (TSPKAKEPLP…REELQHSSSG (845 aa)). Residues 41-598 (SPKAKEPLPL…KRHKDIWSKE (558 aa)) are heparan sulfate N-deacetylase 2. Residues 49–82 (PLPLGDCSSSGAAGGPGPVRPPVPPRPPRPPETA) are disordered. Over residues 66–79 (PVRPPVPPRPPRPP) the composition is skewed to pro residues. N-linked (GlcNAc...) asparagine glycosylation is found at Asn351 and Asn401. Positions 599 to 884 (KTCDRLPKFL…REELQHSSSG (286 aa)) are heparan sulfate N-sulfotransferase 2. Lys614 functions as the For sulfotransferase activity in the catalytic mechanism. 614 to 618 (KTGTT) contacts 3'-phosphoadenylyl sulfate. Asn667 carries N-linked (GlcNAc...) asparagine glycosylation. 3'-phosphoadenylyl sulfate is bound at residue Ser712. N-linked (GlcNAc...) asparagine glycosylation is found at Asn727 and Asn803. Cys818 and Cys828 are joined by a disulfide. A 3'-phosphoadenylyl sulfate-binding site is contributed by 833-837 (KGRKY).

The protein belongs to the sulfotransferase 1 family. NDST subfamily. As to quaternary structure, monomer.

Its subcellular location is the golgi apparatus membrane. It catalyses the reaction alpha-D-glucosaminyl-[heparan sulfate](n) + 3'-phosphoadenylyl sulfate = N-sulfo-alpha-D-glucosaminyl-[heparan sulfate](n) + adenosine 3',5'-bisphosphate + 2 H(+). It participates in glycan metabolism; heparan sulfate biosynthesis. It functions in the pathway glycan metabolism; heparin biosynthesis. Its function is as follows. Essential bifunctional enzyme that catalyzes both the N-deacetylation and the N-sulfation of glucosamine (GlcNAc) of the glycosaminoglycan in heparan sulfate. Modifies the GlcNAc-GlcA disaccharide repeating sugar backbone to make N-sulfated heparosan, a prerequisite substrate for later modifications in heparin biosynthesis. Plays a role in determining the extent and pattern of sulfation of heparan sulfate. Required for the exosomal release of SDCBP, CD63 and syndecan. The polypeptide is Bifunctional heparan sulfate N-deacetylase/N-sulfotransferase 2 (NDST2) (Bos taurus (Bovine)).